A 358-amino-acid polypeptide reads, in one-letter code: Neuronal-specific septin-3 (358 aa).

Over residues 1-10 the composition is skewed to basic and acidic residues; sequence MSKGLPEART. Positions 1-29 are disordered; sequence MSKGLPEARTDTAMSELVPEPRPKPAVPM. In terms of domain architecture, Septin-type G spans 58-331; sequence TGFDFNIMVV…ETYRAKRLND (274 aa). The interval 68-75 is G1 motif; it reads GQSGLGKS. 68-75 provides a ligand contact to GTP; that stretch reads GQSGLGKS. S91 is modified (phosphoserine). T102 is a GTP binding site. The G3 motif stretch occupies residues 125–128; sequence DTPG. Residues 207–210 form a G4 motif region; sequence AKAD. GTP contacts are provided by residues 208 to 216, G265, and R280; that span reads KADTMTLEE.

It belongs to the TRAFAC class TrmE-Era-EngA-EngB-Septin-like GTPase superfamily. Septin GTPase family. Septins polymerize into heterooligomeric protein complexes that form filaments, and can associate with cellular membranes, actin filaments and microtubules. GTPase activity is required for filament formation. In terms of processing, phosphorylated by PKG on serine residues. Phosphorylated by PKG on Ser-91. In terms of tissue distribution, brain-specific, with highest expression in the hippocampal CA3 region (at protein level).

Its subcellular location is the cytoplasm. It localises to the cytoskeleton. The protein resides in the synapse. Functionally, filament-forming cytoskeletal GTPase. May play a role in cytokinesis (Potential). The protein is Neuronal-specific septin-3 of Rattus norvegicus (Rat).